The following is a 592-amino-acid chain: Testis-specific serine kinase substrate (592 aa).

Serine 217 is subject to Phosphoserine. Residues 232 to 308 (QDETPRRQEA…VPAGWGMGPR (77 aa)) are disordered. Over residues 234 to 264 (ETPRRQEAELQEPEEKQEPEEKQEPEEKQKP) the composition is skewed to basic and acidic residues. Positions 269-281 (SWNSLGPAATSQG) are enriched in polar residues. Serine 288 carries the post-translational modification Phosphoserine; by TSSK1 and TSSK2. A Phosphoserine modification is found at serine 316. Positions 566–592 (LEGSTGTMGGGSSAGTPPKQGGSAPEQ) are disordered.

In terms of processing, phosphorylated on serine residue(s) by STK22A/TSSK1 and STK22B/TSSK2. As to expression, highly expressed in testis. Expressed at low levels in prostate, female breast, placenta, ovary and thymus.

It localises to the cytoplasm. Its subcellular location is the cytoskeleton. The protein localises to the microtubule organizing center. It is found in the centrosome. The protein resides in the centriole. In terms of biological role, may play a role in testicular physiology, most probably in the process of spermatogenesis or spermatid development. The protein is Testis-specific serine kinase substrate (TSKS) of Homo sapiens (Human).